Reading from the N-terminus, the 29-residue chain is Cytochrome b6-f complex subunit 8 (29 aa).

Residues 3–23 (IVSIAWAALMVVFSFSLSLVV) form a helical membrane-spanning segment.

This sequence belongs to the PetN family. As to quaternary structure, the 4 large subunits of the cytochrome b6-f complex are cytochrome b6, subunit IV (17 kDa polypeptide, PetD), cytochrome f and the Rieske protein, while the 4 small subunits are PetG, PetL, PetM and PetN. The complex functions as a dimer.

The protein localises to the plastid. It localises to the chloroplast thylakoid membrane. Component of the cytochrome b6-f complex, which mediates electron transfer between photosystem II (PSII) and photosystem I (PSI), cyclic electron flow around PSI, and state transitions. This is Cytochrome b6-f complex subunit 8 from Phaseolus vulgaris (Kidney bean).